Reading from the N-terminus, the 134-residue chain is Syncollin (134 aa).

Positions 1–21 (MSPLRPLLLALALASVPCAQG) are cleaved as a signal peptide.

As to quaternary structure, monomer and homooligomer; most probably hexameric. Interacts with GP2. Post-translationally, contains intrachain disulfide bonds.

Its subcellular location is the zymogen granule membrane. The protein resides in the zymogen granule lumen. In terms of biological role, functions in exocytosis in pancreatic acinar cells regulating the fusion of zymogen granules with each other. May have a pore-forming activity on membranes and regulate exocytosis in other exocrine tissues. This Homo sapiens (Human) protein is Syncollin (SYCN).